Consider the following 125-residue polypeptide: Large ribosomal subunit protein bL12 (125 aa).

The disordered stretch occupies residues 95–125; it reads APKPIKEGVDKKTAEEAKKKLEEAGAKAELK.

This sequence belongs to the bacterial ribosomal protein bL12 family. Homodimer. Part of the ribosomal stalk of the 50S ribosomal subunit. Forms a multimeric L10(L12)X complex, where L10 forms an elongated spine to which 2 to 4 L12 dimers bind in a sequential fashion. Binds GTP-bound translation factors.

Its function is as follows. Forms part of the ribosomal stalk which helps the ribosome interact with GTP-bound translation factors. Is thus essential for accurate translation. This is Large ribosomal subunit protein bL12 from Polynucleobacter necessarius subsp. necessarius (strain STIR1).